We begin with the raw amino-acid sequence, 90 residues long: Mu-theraphotoxin-Phlo1b (90 aa).

Residues 1–22 form the signal peptide; sequence MKVSVLITLAVLGVMFVWTSAA. Residues 23–50 constitute a propeptide that is removed on maturation; it reads EQEDHGSDRRDSPALLKSLGRVFQSEER. 3 disulfides stabilise this stretch: Cys52–Cys66, Cys59–Cys71, and Cys65–Cys79. Residue Phe85 is modified to Phenylalanine amide. Positions 86–90 are excised as a propeptide; it reads GNEKS.

This sequence belongs to the neurotoxin 10 (Hwtx-1) family. 39 (Jztx-34) subfamily. As to expression, expressed by the venom gland.

It is found in the secreted. Its function is as follows. Gating-modifier toxin that inhibits voltage-gated sodium channel Nav by shifting the threshold for channel activation to more positive potentials. This toxin moderately inhibits human Nav1.7/SCN9A (IC(50)=360 nM) and weakly inhibits hNav1.2/SCN2A (37% inhibition at 1 uM peptide) and hNav1.5/SCN5A (&lt;20% inhibition at 1 uM peptide). Inhibition of Nav1.7 is voltage-dependent, with lower inhibition at more positive test pulses. The chain is Mu-theraphotoxin-Phlo1b from Phlogius sp. (Tarantula spider).